The chain runs to 798 residues: Phenylalanine--tRNA ligase beta subunit (798 aa).

Positions 39-148 (SKHLGGFVVG…VTLAVGASLL (110 aa)) constitute a tRNA-binding domain. In terms of domain architecture, B5 spans 401-476 (DWQKSIVLRP…RINGYDNIPA (76 aa)). Mg(2+) contacts are provided by D454, D460, E463, and E464. The FDX-ACB domain occupies 704 to 797 (SALQPLDRDF…VAKATGGELR (94 aa)).

This sequence belongs to the phenylalanyl-tRNA synthetase beta subunit family. Type 1 subfamily. Tetramer of two alpha and two beta subunits. Mg(2+) serves as cofactor.

The protein localises to the cytoplasm. The enzyme catalyses tRNA(Phe) + L-phenylalanine + ATP = L-phenylalanyl-tRNA(Phe) + AMP + diphosphate + H(+). The sequence is that of Phenylalanine--tRNA ligase beta subunit from Paramagnetospirillum magneticum (strain ATCC 700264 / AMB-1) (Magnetospirillum magneticum).